A 466-amino-acid chain; its full sequence is UDP-N-acetylmuramoylalanine--D-glutamate ligase (466 aa).

Residue 121–127 (GTNGKST) coordinates ATP.

Belongs to the MurCDEF family.

Its subcellular location is the cytoplasm. The catalysed reaction is UDP-N-acetyl-alpha-D-muramoyl-L-alanine + D-glutamate + ATP = UDP-N-acetyl-alpha-D-muramoyl-L-alanyl-D-glutamate + ADP + phosphate + H(+). Its pathway is cell wall biogenesis; peptidoglycan biosynthesis. In terms of biological role, cell wall formation. Catalyzes the addition of glutamate to the nucleotide precursor UDP-N-acetylmuramoyl-L-alanine (UMA). The sequence is that of UDP-N-acetylmuramoylalanine--D-glutamate ligase from Rhodopseudomonas palustris (strain HaA2).